A 173-amino-acid polypeptide reads, in one-letter code: Crossover junction endodeoxyribonuclease RuvC (173 aa).

Active-site residues include D8, E67, and D139. Mg(2+) is bound by residues D8, E67, and D139.

Belongs to the RuvC family. In terms of assembly, homodimer which binds Holliday junction (HJ) DNA. The HJ becomes 2-fold symmetrical on binding to RuvC with unstacked arms; it has a different conformation from HJ DNA in complex with RuvA. In the full resolvosome a probable DNA-RuvA(4)-RuvB(12)-RuvC(2) complex forms which resolves the HJ. Requires Mg(2+) as cofactor.

The protein resides in the cytoplasm. It carries out the reaction Endonucleolytic cleavage at a junction such as a reciprocal single-stranded crossover between two homologous DNA duplexes (Holliday junction).. Functionally, the RuvA-RuvB-RuvC complex processes Holliday junction (HJ) DNA during genetic recombination and DNA repair. Endonuclease that resolves HJ intermediates. Cleaves cruciform DNA by making single-stranded nicks across the HJ at symmetrical positions within the homologous arms, yielding a 5'-phosphate and a 3'-hydroxyl group; requires a central core of homology in the junction. The consensus cleavage sequence is 5'-(A/T)TT(C/G)-3'. Cleavage occurs on the 3'-side of the TT dinucleotide at the point of strand exchange. HJ branch migration catalyzed by RuvA-RuvB allows RuvC to scan DNA until it finds its consensus sequence, where it cleaves and resolves the cruciform DNA. In Enterobacter sp. (strain 638), this protein is Crossover junction endodeoxyribonuclease RuvC.